We begin with the raw amino-acid sequence, 55 residues long: uncharacterized protein (55 aa).

The helical transmembrane segment at 7–24 threads the bilayer; sequence VALVGAVLATLTACTGHI.

The protein resides in the membrane. This is an uncharacterized protein from Escherichia coli O157:H7.